We begin with the raw amino-acid sequence, 118 residues long: MDYVGGSLKLKNVKKKPLKKKKKDSKKLAEKVQEHSSRDKSPLEENGVSTYQMLRSKDTDSAMPMTEAQKHFESVQEQRLLQKAKNERLKTHKDRIDEYNRLLESQSEHFDMPKIGPG.

Residues 1 to 49 form a disordered region; it reads MDYVGGSLKLKNVKKKPLKKKKKDSKKLAEKVQEHSSRDKSPLEENGVS. Over residues 11–25 the composition is skewed to basic residues; the sequence is KNVKKKPLKKKKKDS. The segment covering 26-43 has biased composition (basic and acidic residues); that stretch reads KKLAEKVQEHSSRDKSPL.

This is an uncharacterized protein from Schizosaccharomyces pombe (strain 972 / ATCC 24843) (Fission yeast).